Here is a 740-residue protein sequence, read N- to C-terminus: ATP-dependent RNA helicase DDX1 (740 aa).

The interaction with dsRNA stretch occupies residues 1-448; sequence MAAFSEMGVM…ETVHHVVVPV (448 aa). Positions 2-428 constitute a Helicase ATP-binding domain; it reads AAFSEMGVMP…SEKIMHFPTW (427 aa). 46-53 provides a ligand contact to ATP; it reads AETGSGKT. The B30.2/SPRY domain maps to 70–247; that stretch reads DQQEGKKGKA…LKFNFGEEDF (178 aa). A DEAD box motif is present at residues 370–373; the sequence is DEAD. Residues 493–681 form the Helicase C-terminal domain; the sequence is KGEYIVRAIK…QVEPDIKVPL (189 aa).

The protein belongs to the DEAD box helicase family. DDX1 subfamily.

It is found in the nucleus. The protein localises to the cytoplasm. The protein resides in the cytoplasmic granule. It localises to the cytosol. Its subcellular location is the mitochondrion. It catalyses the reaction ATP + H2O = ADP + phosphate + H(+). In terms of biological role, acts as an ATP-dependent RNA helicase, able to unwind both RNA-RNA and RNA-DNA duplexes. Possesses 5' single-stranded RNA overhang nuclease activity. Acts as a positive regulator of transcription. May be involved in 3'-end cleavage and polyadenylation of pre-mRNAs. Binds DNA and RNA. Component of the tRNA-splicing ligase complex required to facilitate the enzymatic turnover of catalytic subunit rtcb. Binds (via helicase ATP-binding domain) on both short and long poly(I:C) dsRNA. The polypeptide is ATP-dependent RNA helicase DDX1 (ddx1) (Xenopus laevis (African clawed frog)).